The sequence spans 754 residues: 5-methyltetrahydropteroyltriglutamate--homocysteine methyltransferase (754 aa).

5-methyltetrahydropteroyltri-L-glutamate is bound by residues 17 to 20 and lysine 117; that span reads RELK. L-homocysteine is bound by residues 431-433 and glutamate 484; that span reads IGS. Residues 431 to 433 and glutamate 484 contribute to the L-methionine site; that span reads IGS. 5-methyltetrahydropteroyltri-L-glutamate is bound by residues 515–516 and tryptophan 561; that span reads RC. Aspartate 599 is an L-homocysteine binding site. Aspartate 599 provides a ligand contact to L-methionine. Glutamate 605 contributes to the 5-methyltetrahydropteroyltri-L-glutamate binding site. Residues histidine 641, cysteine 643, and glutamate 665 each coordinate Zn(2+). Histidine 694 serves as the catalytic Proton donor. Cysteine 726 is a binding site for Zn(2+).

Belongs to the vitamin-B12 independent methionine synthase family. The cofactor is Zn(2+).

It carries out the reaction 5-methyltetrahydropteroyltri-L-glutamate + L-homocysteine = tetrahydropteroyltri-L-glutamate + L-methionine. Its pathway is amino-acid biosynthesis; L-methionine biosynthesis via de novo pathway; L-methionine from L-homocysteine (MetE route): step 1/1. In terms of biological role, catalyzes the transfer of a methyl group from 5-methyltetrahydrofolate to homocysteine resulting in methionine formation. In Salmonella arizonae (strain ATCC BAA-731 / CDC346-86 / RSK2980), this protein is 5-methyltetrahydropteroyltriglutamate--homocysteine methyltransferase.